A 432-amino-acid polypeptide reads, in one-letter code: Adenosylhomocysteinase (432 aa).

S2 is subject to N-acetylserine. 3 residues coordinate substrate: T57, D131, and E156. 157–159 (TTT) contributes to the NAD(+) binding site. Position 183 is a phosphoserine (S183). Residues K186 and D190 each coordinate substrate. The residue at position 186 (K186) is an N6-(2-hydroxyisobutyryl)lysine. Y193 carries the post-translational modification Phosphotyrosine. NAD(+) is bound by residues 222–227 (GDVGKG), E243, N248, 299–301 (IGH), N346, and H353.

Belongs to the adenosylhomocysteinase family. In terms of assembly, homotetramer. Interaction with AHCYL1. Requires NAD(+) as cofactor.

The protein resides in the cytoplasm. Its subcellular location is the melanosome. The protein localises to the nucleus. It localises to the endoplasmic reticulum. The enzyme catalyses S-adenosyl-L-homocysteine + H2O = L-homocysteine + adenosine. It functions in the pathway amino-acid biosynthesis; L-homocysteine biosynthesis; L-homocysteine from S-adenosyl-L-homocysteine: step 1/1. Catalyzes the hydrolysis of S-adenosyl-L-homocysteine to form adenosine and homocysteine. Binds copper ions. The chain is Adenosylhomocysteinase (AHCY) from Homo sapiens (Human).